Consider the following 708-residue polypeptide: Caprin-1 (708 aa).

Composition is skewed to low complexity over residues 1–15 (MPSATSHSGSGSKSS) and 22–37 (GSSGNEAGAGAAAPAS). The disordered stretch occupies residues 1-48 (MPSATSHSGSGSKSSGPPPPSGSSGNEAGAGAAAPASQHPMTGTGAVQ). Pro2 is subject to N-acetylproline. Ser10 is subject to Phosphoserine. Positions 58-92 (VIDKKLRNLEKKKGKLDDYQERMNKGERLNQDQLD) form a coiled coil. Position 113 is a phosphoserine (Ser113). Residues 123–151 (KTIKKTARREQLMREEAEQKRLKTVLELQ) adopt a coiled-coil conformation. Arg163 is modified (omega-N-methylarginine). Residues 258–287 (EEAASAPTVEDQAAEAEPEPVEEYTEQNEV) form a disordered region. The segment covering 269-287 (QAAEAEPEPVEEYTEQNEV) has biased composition (acidic residues). Residues Ser333 and Ser341 each carry the phosphoserine modification. Positions 358 to 379 (QDLMAQMQGPYNFIQDSMLDFE) are G3BP1-binding. Over residues 415 to 452 (LAQPNQVSVQPEATQVPLVSSTSEGYTASQPLYQPSHA) the composition is skewed to polar residues. 4 disordered regions span residues 415–459 (LAQP…RPQK), 473–497 (TDQTTASSSLPAASQPQVFQAGTSK), 521–559 (NAPVPPVNEPETLKQQNQYQASYNQSFSSQPHQVEQTEL), and 571–708 (YHGS…QQVN). Composition is skewed to low complexity over residues 475–489 (QTTASSSLPAASQPQ) and 535–559 (QQNQYQASYNQSFSSQPHQVEQTEL). Over residues 572–603 (HGSQDQPHQVTGNHQQPPQQNTGFPRSNQPYY) the composition is skewed to polar residues. Tyr623 is subject to Phosphotyrosine. Residues Arg624 and Arg631 each carry the omega-N-methylarginine modification. Phosphotyrosine occurs at positions 634 and 637. The residue at position 638 (Arg638) is an Omega-N-methylarginine. Residues 640–656 (SFSTNTPNSGYTQSQFS) show a composition bias toward polar residues. 2 O-linked (GlcNAc) serine glycosylation sites follow: Ser642 and Ser648. Tyr650, Tyr661, Tyr664, and Tyr669 each carry phosphotyrosine. 2 stretches are compositionally biased toward low complexity: residues 675–685 (RGSGQSGPRGA) and 696–708 (NRGMPQMNTQQVN). Residue Arg697 is modified to Asymmetric dimethylarginine; alternate. Residue Arg697 is modified to Omega-N-methylarginine; alternate.

The protein belongs to the caprin family. As to quaternary structure, may form homomultimers. Interacts with G3BP1; interaction is direct and promotes stress granule formation. Interacts with G3BP2; interaction is direct and promotes stress granule formation. Interacts with PQBP1. Interacts with DDX3X. Interacts (when phosphorylated by EPHA4) with FMR1; interaction with FMR1 promotes formation of a membraneless compartment. Post-translationally, tyrosine phosphorylation by EPHA4 promotes interaction with FMR1 and liquid-liquid phase separation (LLPS) for the formation of a membraneless compartment that concentrates mRNAs with associated regulatory factors. In terms of processing, O-glycosylated (O-GlcNAcylated), in a cell cycle-dependent manner. O-glycosylation by OGT inhibit ability to undergo liquid-liquid phase separation (LLPS).

The protein localises to the cytoplasm. It localises to the cytoplasmic ribonucleoprotein granule. Its subcellular location is the cytosol. The protein resides in the cell projection. It is found in the dendrite. The protein localises to the lamellipodium. Ability to mediate liquid-liquid phase separation is regulated by ATP: moderate concentrations of ATP enhance phase separation, whereas high concentrations of ATP lead to inhibition of phase separation. In terms of biological role, mRNA-binding protein that acts as a regulator of mRNAs transport, translation and/or stability, and which is involved in neurogenesis, synaptic plasticity in neurons and cell proliferation and migration in multiple cell types. Plays an essential role in cytoplasmic stress granule formation. Acts as an mRNA regulator by mediating formation of some phase-separated membraneless compartment: undergoes liquid-liquid phase separation upon binding to target mRNAs, leading to assemble mRNAs into cytoplasmic ribonucleoprotein granules that concentrate mRNAs with associated regulatory factors. Undergoes liquid-liquid phase separation following phosphorylation and interaction with FMR1, promoting formation of cytoplasmic ribonucleoprotein granules that concentrate mRNAs with factors that inhibit translation and mediate deadenylation of target mRNAs. In these cytoplasmic ribonucleoprotein granules, CAPRIN1 mediates recruitment of CNOT7 deadenylase, leading to mRNA deadenylation and degradation. Binds directly and selectively to MYC and CCND2 mRNAs. In neuronal cells, directly binds to several mRNAs associated with RNA granules, including BDNF, CAMK2A, CREB1, MAP2, NTRK2 mRNAs, as well as to GRIN1 and KPNB1 mRNAs, but not to rRNAs. This chain is Caprin-1 (CAPRIN1), found in Bos taurus (Bovine).